A 312-amino-acid chain; its full sequence is Pre-mRNA-splicing factor 38A (312 aa).

Residues Met-1–Pro-179 are N-terminal protein interaction domain. Phosphoserine occurs at positions 11, 193, 194, 209, and 226. Residues Val-170–Leu-204 adopt a coiled-coil conformation. Positions Val-181–Glu-312 are disordered. The segment covering Leu-184–Glu-202 has biased composition (acidic residues). Positions Lys-203–Arg-224 are enriched in basic and acidic residues. Composition is skewed to basic residues over residues Arg-225–Ser-294 and Lys-301–Glu-312.

It belongs to the PRP38 family. Component of the spliceosome B complex. Interacts (via N-terminal interaction domain) with ZMAT2 and MFAP1.

The protein localises to the nucleus. Involved in pre-mRNA splicing as a component of the spliceosome. This is Pre-mRNA-splicing factor 38A (Prpf38a) from Mus musculus (Mouse).